Reading from the N-terminus, the 290-residue chain is Phosphoribosylaminoimidazole-succinocarboxamide synthase (290 aa).

This sequence belongs to the SAICAR synthetase family.

It carries out the reaction 5-amino-1-(5-phospho-D-ribosyl)imidazole-4-carboxylate + L-aspartate + ATP = (2S)-2-[5-amino-1-(5-phospho-beta-D-ribosyl)imidazole-4-carboxamido]succinate + ADP + phosphate + 2 H(+). Its pathway is purine metabolism; IMP biosynthesis via de novo pathway; 5-amino-1-(5-phospho-D-ribosyl)imidazole-4-carboxamide from 5-amino-1-(5-phospho-D-ribosyl)imidazole-4-carboxylate: step 1/2. The sequence is that of Phosphoribosylaminoimidazole-succinocarboxamide synthase (purC) from Haemophilus influenzae (strain ATCC 51907 / DSM 11121 / KW20 / Rd).